Reading from the N-terminus, the 589-residue chain is Sulfite reductase [NADPH] hemoprotein beta-component (589 aa).

The [4Fe-4S] cluster site is built by cysteine 443, cysteine 449, cysteine 488, and cysteine 492. A siroheme-binding site is contributed by cysteine 492.

This sequence belongs to the nitrite and sulfite reductase 4Fe-4S domain family. As to quaternary structure, alpha(8)-beta(8). The alpha component is a flavoprotein, the beta component is a hemoprotein. It depends on siroheme as a cofactor. [4Fe-4S] cluster is required as a cofactor.

It carries out the reaction hydrogen sulfide + 3 NADP(+) + 3 H2O = sulfite + 3 NADPH + 4 H(+). Its pathway is sulfur metabolism; hydrogen sulfide biosynthesis; hydrogen sulfide from sulfite (NADPH route): step 1/1. Component of the sulfite reductase complex that catalyzes the 6-electron reduction of sulfite to sulfide. This is one of several activities required for the biosynthesis of L-cysteine from sulfate. The chain is Sulfite reductase [NADPH] hemoprotein beta-component from Neisseria meningitidis serogroup C (strain 053442).